A 446-amino-acid chain; its full sequence is Glycerol-3-phosphate acyltransferase 3 (446 aa).

3 helical membrane-spanning segments follow: residues Ile11 to Ser31, Leu146 to Leu166, and Ile168 to Leu188. Residues His236 to Asp241 carry the HXXXXD motif motif.

Belongs to the 1-acyl-sn-glycerol-3-phosphate acyltransferase family.

It localises to the endoplasmic reticulum membrane. It catalyses the reaction sn-glycerol 3-phosphate + an acyl-CoA = a 1-acyl-sn-glycero-3-phosphate + CoA. The enzyme catalyses a 1-acyl-sn-glycero-3-phosphate + an acyl-CoA = a 1,2-diacyl-sn-glycero-3-phosphate + CoA. It carries out the reaction dodecanoyl-CoA + sn-glycerol 3-phosphate = 1-dodecanoyl-sn-glycerol 3-phosphate + CoA. The catalysed reaction is sn-glycerol 3-phosphate + hexadecanoyl-CoA = 1-hexadecanoyl-sn-glycero-3-phosphate + CoA. It catalyses the reaction sn-glycerol 3-phosphate + (9Z)-octadecenoyl-CoA = 1-(9Z-octadecenoyl)-sn-glycero-3-phosphate + CoA. The enzyme catalyses (9Z,12Z)-octadecadienoyl-CoA + sn-glycerol 3-phosphate = 1-(9Z,12Z)-octadecadienoyl-sn-glycero-3-phosphate + CoA. It carries out the reaction 1-tetradecanoyl-sn-glycerol 3-phosphate + (9Z)-octadecenoyl-CoA = 1-tetradecanoyl-2-(9Z)-octadecenoyl-sn-glycero-3-phosphate + CoA. The catalysed reaction is 1-hexadecanoyl-sn-glycero-3-phosphate + (9Z)-octadecenoyl-CoA = 1-hexadecanoyl-2-(9Z-octadecenoyl)-sn-glycero-3-phosphate + CoA. It catalyses the reaction 1-(9Z-octadecenoyl)-sn-glycero-3-phosphate + (9Z)-octadecenoyl-CoA = 1,2-di-(9Z-octadecenoyl)-sn-glycero-3-phosphate + CoA. The enzyme catalyses 1-(6Z,9Z,12Z-octadecatrienoyl)-sn-glycero-3-phosphate + (9Z)-octadecenoyl-CoA = (6Z,9Z,12Z)-octadecatrienoyl-2-(9Z)-octadecenoyl-sn-glycero-3-phosphate + CoA. It carries out the reaction 1-(9Z,12Z,15Z)-octadecatrienoyl-sn-glycero-3-phosphate + (9Z)-octadecenoyl-CoA = 1-(9Z,12Z,15Z)-octadecatrienoyl-2-(9Z)-octadecenoyl-sn-glycero-3-phosphate + CoA. The catalysed reaction is 1-(9Z-octadecenoyl)-sn-glycero-3-phosphate + tetradecanoyl-CoA = 1-(9Z)-octadecenoyl-2-tetradecanoyl-sn-glycero-3-phosphate + CoA. It catalyses the reaction 1-(9Z-octadecenoyl)-sn-glycero-3-phosphate + hexadecanoyl-CoA = 1-(9Z)-octadecenoyl-2-hexadecanoyl-sn-glycero-3-phosphate + CoA. The enzyme catalyses 1-(9Z-octadecenoyl)-sn-glycero-3-phosphate + octadecanoyl-CoA = 1-(9Z-octadecenoyl)-2-octadecanoyl-sn-glycero-3-phosphate + CoA. It carries out the reaction 1-(9Z-octadecenoyl)-sn-glycero-3-phosphate + (9Z,12Z)-octadecadienoyl-CoA = 1-(9Z)-octadecenoyl-2-(9Z,12Z)-octadecadienoyl-sn-glycero-3-phosphate + CoA. The catalysed reaction is 1-(5Z,8Z,11Z,14Z-eicosatetraenoyl)-sn-glycero-3-phosphate + (9Z)-octadecenoyl-CoA = 1-(5Z,8Z,11Z,14Z)-eicosatetraenoyl-2-(9Z)-octadecenoyl-sn-glycero-3-phosphate + CoA. The protein operates within glycerolipid metabolism; triacylglycerol biosynthesis. It functions in the pathway phospholipid metabolism; CDP-diacylglycerol biosynthesis; CDP-diacylglycerol from sn-glycerol 3-phosphate: step 1/3. In terms of biological role, converts glycerol-3-phosphate to 1-acyl-sn-glycerol-3-phosphate (lysophosphatidic acid or LPA) by incorporating an acyl moiety at the sn-1 position of the glycerol backbone. Also converts LPA into 1,2-diacyl-sn-glycerol-3-phosphate (phosphatidic acid or PA) by incorporating an acyl moiety at the sn-2 position of the glycerol backbone. Protects cells against lipotoxicity. In Xenopus laevis (African clawed frog), this protein is Glycerol-3-phosphate acyltransferase 3.